The primary structure comprises 889 residues: Alanine--tRNA ligase (889 aa).

His569, His573, Cys671, and His675 together coordinate Zn(2+).

The protein belongs to the class-II aminoacyl-tRNA synthetase family. Zn(2+) is required as a cofactor.

The protein localises to the cytoplasm. It carries out the reaction tRNA(Ala) + L-alanine + ATP = L-alanyl-tRNA(Ala) + AMP + diphosphate. In terms of biological role, catalyzes the attachment of alanine to tRNA(Ala) in a two-step reaction: alanine is first activated by ATP to form Ala-AMP and then transferred to the acceptor end of tRNA(Ala). Also edits incorrectly charged Ser-tRNA(Ala) and Gly-tRNA(Ala) via its editing domain. This Parasynechococcus marenigrum (strain WH8102) protein is Alanine--tRNA ligase.